The chain runs to 185 residues: Elongation factor P (185 aa).

It belongs to the elongation factor P family.

The protein localises to the cytoplasm. Its pathway is protein biosynthesis; polypeptide chain elongation. Its function is as follows. Involved in peptide bond synthesis. Stimulates efficient translation and peptide-bond synthesis on native or reconstituted 70S ribosomes in vitro. Probably functions indirectly by altering the affinity of the ribosome for aminoacyl-tRNA, thus increasing their reactivity as acceptors for peptidyl transferase. The chain is Elongation factor P from Methylobacillus flagellatus (strain ATCC 51484 / DSM 6875 / VKM B-1610 / KT).